The chain runs to 495 residues: UDP-N-acetylmuramoyl-L-alanyl-D-glutamate--2,6-diaminopimelate ligase (495 aa).

UDP-N-acetyl-alpha-D-muramoyl-L-alanyl-D-glutamate is bound by residues Leu-27, Ser-29, and 44 to 46 (HQA). 116-122 (GTNGKTT) serves as a coordination point for ATP. Residues Asn-157, 158–159 (TT), Ser-185, Gln-191, and Arg-193 each bind UDP-N-acetyl-alpha-D-muramoyl-L-alanyl-D-glutamate. The residue at position 225 (Lys-225) is an N6-carboxylysine. Meso-2,6-diaminopimelate is bound by residues Arg-390, 414–417 (DNPR), Gly-465, and Glu-469. Residues 414-417 (DNPR) carry the Meso-diaminopimelate recognition motif motif.

Belongs to the MurCDEF family. MurE subfamily. Mg(2+) is required as a cofactor. In terms of processing, carboxylation is probably crucial for Mg(2+) binding and, consequently, for the gamma-phosphate positioning of ATP.

Its subcellular location is the cytoplasm. The enzyme catalyses UDP-N-acetyl-alpha-D-muramoyl-L-alanyl-D-glutamate + meso-2,6-diaminopimelate + ATP = UDP-N-acetyl-alpha-D-muramoyl-L-alanyl-gamma-D-glutamyl-meso-2,6-diaminopimelate + ADP + phosphate + H(+). Its pathway is cell wall biogenesis; peptidoglycan biosynthesis. Catalyzes the addition of meso-diaminopimelic acid to the nucleotide precursor UDP-N-acetylmuramoyl-L-alanyl-D-glutamate (UMAG) in the biosynthesis of bacterial cell-wall peptidoglycan. The sequence is that of UDP-N-acetylmuramoyl-L-alanyl-D-glutamate--2,6-diaminopimelate ligase from Salmonella typhimurium (strain LT2 / SGSC1412 / ATCC 700720).